The chain runs to 400 residues: Zinc finger protein 514 (400 aa).

Residues 1–72 (MTFEDVAVEF…EREISTGAHS (72 aa)) form the KRAB domain. 7 consecutive C2H2-type zinc fingers follow at residues 204 to 226 (CKCNECGKSFHFQSELRRHQRCH), 232 to 254 (YECSDCGRAFGHISSLIKHQRTH), 260 to 282 (YECSECGRAFSQSSSLVLHYRFH), 288 to 310 (YKCNECGRAFGHTSSLIKHQRTH), 316 to 338 (YECRECGRTFSQSSSLIVHYRFH), 344 to 366 (YKCNKCGRAFSQSSSLTQHYRFH), and 372 to 394 (YKCNECGRAFAHTASLIKHQRSH).

Belongs to the krueppel C2H2-type zinc-finger protein family.

It localises to the nucleus. May be involved in transcriptional regulation. In Homo sapiens (Human), this protein is Zinc finger protein 514 (ZNF514).